Here is a 346-residue protein sequence, read N- to C-terminus: Dihydroorotase (346 aa).

Positions 14 and 16 each coordinate Zn(2+). Residues 16–18 (HLR) and asparagine 42 contribute to the substrate site. Lysine 100, histidine 137, and histidine 175 together coordinate Zn(2+). N6-carboxylysine is present on lysine 100. Histidine 137 serves as a coordination point for substrate. Leucine 220 provides a ligand contact to substrate. Position 248 (aspartate 248) interacts with Zn(2+). Aspartate 248 is an active-site residue. Residues histidine 252 and alanine 264 each contribute to the substrate site.

It belongs to the metallo-dependent hydrolases superfamily. DHOase family. Class II DHOase subfamily. Homodimer. Zn(2+) serves as cofactor.

It catalyses the reaction (S)-dihydroorotate + H2O = N-carbamoyl-L-aspartate + H(+). It functions in the pathway pyrimidine metabolism; UMP biosynthesis via de novo pathway; (S)-dihydroorotate from bicarbonate: step 3/3. In terms of biological role, catalyzes the reversible cyclization of carbamoyl aspartate to dihydroorotate. This Ruegeria pomeroyi (strain ATCC 700808 / DSM 15171 / DSS-3) (Silicibacter pomeroyi) protein is Dihydroorotase.